We begin with the raw amino-acid sequence, 785 residues long: Penicillin-binding protein 1A (785 aa).

The disordered stretch occupies residues 1–61 (MPPDDRLTAV…SGPGGPSGPG (61 aa)). Residues 33–45 (SPPPKPPPPPPPG) are compositionally biased toward pro residues. Gly residues predominate over residues 46–59 (RGGGGPSGPGGPSG). A helical transmembrane segment spans residues 77–97 (IAVAVMVLLPLITFGMAYMIV). The tract at residues 118–299 (GSEIARIVPP…RWNWVLDGMV (182 aa)) is transglycosylase. E151 serves as the catalytic Proton donor; for transglycosylase activity. The segment at 392-662 (AVVSIDPRTG…EGVKPLVNKW (271 aa)) is transpeptidase. Catalysis depends on S426, which acts as the Acyl-ester intermediate; for transpeptidase activity. Disordered stretches follow at residues 605–626 (SRGH…VQLG), 690–726 (ESFP…QPSV), and 738–785 (GITI…PPPP). 2 stretches are compositionally biased toward pro residues: residues 708 to 721 (PAAP…PTDP) and 743 to 758 (IGPP…PGAP). The span at 759-775 (GAPVGPGAPEVPVAPGA) shows a compositional bias: low complexity.

Its subcellular location is the cell membrane. It carries out the reaction [GlcNAc-(1-&gt;4)-Mur2Ac(oyl-L-Ala-gamma-D-Glu-L-Lys-D-Ala-D-Ala)](n)-di-trans,octa-cis-undecaprenyl diphosphate + beta-D-GlcNAc-(1-&gt;4)-Mur2Ac(oyl-L-Ala-gamma-D-Glu-L-Lys-D-Ala-D-Ala)-di-trans,octa-cis-undecaprenyl diphosphate = [GlcNAc-(1-&gt;4)-Mur2Ac(oyl-L-Ala-gamma-D-Glu-L-Lys-D-Ala-D-Ala)](n+1)-di-trans,octa-cis-undecaprenyl diphosphate + di-trans,octa-cis-undecaprenyl diphosphate + H(+). It catalyses the reaction Preferential cleavage: (Ac)2-L-Lys-D-Ala-|-D-Ala. Also transpeptidation of peptidyl-alanyl moieties that are N-acyl substituents of D-alanine.. The protein operates within cell wall biogenesis; peptidoglycan biosynthesis. Functionally, cell wall formation. Synthesis of cross-linked peptidoglycan from the lipid intermediates. The enzyme has a penicillin-insensitive transglycosylase N-terminal domain (formation of linear glycan strands) and a penicillin-sensitive transpeptidase C-terminal domain (cross-linking of the peptide subunits). The chain is Penicillin-binding protein 1A (ponA1) from Mycolicibacterium smegmatis (strain ATCC 700084 / mc(2)155) (Mycobacterium smegmatis).